The primary structure comprises 623 residues: V-type proton ATPase catalytic subunit A (623 aa).

252–259 (GAFGCGKT) contributes to the ATP binding site.

It belongs to the ATPase alpha/beta chains family. In terms of assembly, V-ATPase is a heteromultimeric enzyme composed of a peripheral catalytic V1 complex (main components: subunits A, B, C, D, E, and F) attached to an integral membrane V0 proton pore complex (main component: the proteolipid protein).

The enzyme catalyses ATP + H2O + 4 H(+)(in) = ADP + phosphate + 5 H(+)(out). Catalytic subunit of the peripheral V1 complex of vacuolar ATPase. V-ATPase vacuolar ATPase is responsible for acidifying a variety of intracellular compartments in eukaryotic cells. The chain is V-type proton ATPase catalytic subunit A from Brassica napus (Rape).